Consider the following 290-residue polypeptide: Fat storage-inducing transmembrane protein 1 (290 aa).

At 1 to 18 (MERGPVVGAGLGARARIR) the chain is on the lumenal side. Residues 19-39 (TLLGCLVKVLLWVASALLYFG) traverse the membrane as a helical segment. The Cytoplasmic portion of the chain corresponds to 40-54 (SEQAARLLGSPCLRR). The chain crosses the membrane as a helical span at residues 55-75 (LYHAWLAAVVIFGPLLQFHVN). Over 76–94 (PRTIFASHGNFFNIKFVNS) the chain is Lumenal. A helical transmembrane segment spans residues 95–115 (AWGWTCTFLGGFVLLVVFLAT). At 116-141 (RRVAVTARHLSRLVVGAAVWRGAGRA) the chain is on the cytoplasmic side. The helical transmembrane segment at 142 to 162 (FLLIEDLTGSCFEPLPQGLLL) threads the bilayer. Residues 163-187 (HELPDRRSRLAAGHQWRGYTVSSHT) lie on the Lumenal side of the membrane. The active site involves His186. Residues 188–208 (FLLTFCCLLMAEEAAVFAKYL) form a helical membrane-spanning segment. The Cytoplasmic portion of the chain corresponds to 209 to 220 (AHGLPAGAPLRL). A helical transmembrane segment spans residues 221–241 (VFLLNVLLLGLWNFLLLCTVI). Residues 242–249 (YFHQYTHK) lie on the Lumenal side of the membrane. Residue His244 is part of the active site. The helical transmembrane segment at 250-270 (VVGAAVGTFAWYLTYGSWYHQ) threads the bilayer. Residues 271–290 (PWSPGSPGHGLFTHPSRKHN) lie on the Cytoplasmic side of the membrane.

The protein belongs to the FIT family. FIT1 subfamily.

The protein resides in the endoplasmic reticulum membrane. Functionally, plays an important role in the formation of lipid droplets (LDs) which are storage organelles at the center of lipid and energy homeostasis. Directly binds to diacylglycerol (DAGs) and triacylglycerol. This Sus scrofa (Pig) protein is Fat storage-inducing transmembrane protein 1.